Reading from the N-terminus, the 798-residue chain is Penicillin-binding protein 1A (798 aa).

At 1-9 the chain is on the cytoplasmic side; that stretch reads MIKKILTTC. A helical; Signal-anchor for type II membrane protein transmembrane segment spans residues 10–30; sequence FGLVFGFCVFGVGLVAIAILV. Topologically, residues 31–798 are periplasmic; the sequence is TYPKLPSLDS…SKQQQLDSLF (768 aa). The transglycosylase stretch occupies residues 50–218; that stretch reads LTIYSADGEV…SAYNPIVNPE (169 aa). Glu-88 serves as the catalytic Proton donor; for transglycosylase activity. A transpeptidase region spans residues 378–700; it reads RRALGFAARA…GTIAVPVWVD (323 aa). The Acyl-ester intermediate; for transpeptidase activity role is filled by Ser-461. The interval 738 to 798 is disordered; it reads GLTLDNSGIA…SKQQQLDSLF (61 aa). The span at 768 to 777 shows a compositional bias: basic and acidic residues; it reads AADDEVRQDM. The span at 783–798 shows a compositional bias: polar residues; that stretch reads LPSNTGSKQQQLDSLF.

The protein in the N-terminal section; belongs to the glycosyltransferase 51 family. In the C-terminal section; belongs to the transpeptidase family.

Its subcellular location is the cell inner membrane. It catalyses the reaction [GlcNAc-(1-&gt;4)-Mur2Ac(oyl-L-Ala-gamma-D-Glu-L-Lys-D-Ala-D-Ala)](n)-di-trans,octa-cis-undecaprenyl diphosphate + beta-D-GlcNAc-(1-&gt;4)-Mur2Ac(oyl-L-Ala-gamma-D-Glu-L-Lys-D-Ala-D-Ala)-di-trans,octa-cis-undecaprenyl diphosphate = [GlcNAc-(1-&gt;4)-Mur2Ac(oyl-L-Ala-gamma-D-Glu-L-Lys-D-Ala-D-Ala)](n+1)-di-trans,octa-cis-undecaprenyl diphosphate + di-trans,octa-cis-undecaprenyl diphosphate + H(+). The enzyme catalyses Preferential cleavage: (Ac)2-L-Lys-D-Ala-|-D-Ala. Also transpeptidation of peptidyl-alanyl moieties that are N-acyl substituents of D-alanine.. It participates in cell wall biogenesis; peptidoglycan biosynthesis. Functionally, cell wall formation. Synthesis of cross-linked peptidoglycan from the lipid intermediates. The enzyme has a penicillin-insensitive transglycosylase N-terminal domain (formation of linear glycan strands) and a penicillin-sensitive transpeptidase C-terminal domain (cross-linking of the peptide subunits). The polypeptide is Penicillin-binding protein 1A (mrcA) (Neisseria meningitidis serogroup A / serotype 4A (strain DSM 15465 / Z2491)).